The sequence spans 366 residues: Nodulation protein NolL (366 aa).

The next 9 helical transmembrane spans lie at 27 to 47 (FVKG…LVIY), 62 to 82 (IYMF…SGTI), 98 to 118 (LLIP…AAFF), 140 to 160 (FLWA…FNLL), 164 to 184 (ILCA…IVPL), 212 to 232 (HKSL…LDWG), 253 to 273 (VLLM…SLFH), 286 to 306 (LVAV…GAVF), and 324 to 344 (IVVA…VLWI).

The protein belongs to the acyltransferase 3 family.

It is found in the cell membrane. Its function is as follows. Thought to be an acetyltransferase that modifies the fucose of the nod factor. This Sinorhizobium fredii (strain NBRC 101917 / NGR234) protein is Nodulation protein NolL (nolL).